The following is a 160-amino-acid chain: UPF0479 membrane protein YLL066W-A (160 aa).

The next 2 membrane-spanning stretches (helical) occupy residues 39-59 and 136-156; these read IVFC…KVLQ and VPMI…ISQH.

It belongs to the UPF0479 family.

It is found in the membrane. This chain is UPF0479 membrane protein YLL066W-A, found in Saccharomyces cerevisiae (strain ATCC 204508 / S288c) (Baker's yeast).